A 909-amino-acid polypeptide reads, in one-letter code: Zinc finger and BTB domain-containing protein 41 (909 aa).

The BTB domain maps to 88-152 (CDLLIIVEGK…LYTSEFFVYK (65 aa)). Residues 207-230 (HQCKFCSRHFCYKKSLENHLAKTH) form a C2H2-type 1 zinc finger. Residues 252 to 344 (RSKRNRKCPV…PEAGDSVGNV (93 aa)) form a disordered region. Residues 266–275 (TSDDEQESGD) show a composition bias toward acidic residues. Positions 284 to 295 (NFDKEKSDRNDS) are enriched in basic and acidic residues. Residues 296-322 (EDPGSEYNAEEDELEEEMSDEYSDIEE) are compositionally biased toward acidic residues. C2H2-type zinc fingers lie at residues 361–383 (LQCP…TRVH), 389–411 (FECD…RKKH), 422–445 (HKCP…KRFH), 463–485 (WKCD…MILH), 491–514 (FKCT…EKFH), 518–541 (FPCD…ECTH), 547–569 (WTCF…LRIH), 575–597 (HLCS…LRVH), 603–625 (YECD…KKIH), 631–654 (HQCE…KSVH), 668–690 (HQCD…FRTH), 696–718 (YKCQ…LVIH), and 724–747 (FNCQ…DHVH).

Its subcellular location is the nucleus. Its function is as follows. May be involved in transcriptional regulation. The sequence is that of Zinc finger and BTB domain-containing protein 41 (ZBTB41) from Homo sapiens (Human).